Reading from the N-terminus, the 245-residue chain is NAD(P)H-quinone oxidoreductase subunit K (245 aa).

The [4Fe-4S] cluster site is built by Cys-58, Cys-59, Cys-123, and Cys-154.

Belongs to the complex I 20 kDa subunit family. NDH-1 can be composed of about 15 different subunits; different subcomplexes with different compositions have been identified which probably have different functions. It depends on [4Fe-4S] cluster as a cofactor.

It localises to the cellular thylakoid membrane. It carries out the reaction a plastoquinone + NADH + (n+1) H(+)(in) = a plastoquinol + NAD(+) + n H(+)(out). It catalyses the reaction a plastoquinone + NADPH + (n+1) H(+)(in) = a plastoquinol + NADP(+) + n H(+)(out). NDH-1 shuttles electrons from an unknown electron donor, via FMN and iron-sulfur (Fe-S) centers, to quinones in the respiratory and/or the photosynthetic chain. The immediate electron acceptor for the enzyme in this species is believed to be plastoquinone. Couples the redox reaction to proton translocation, and thus conserves the redox energy in a proton gradient. Cyanobacterial NDH-1 also plays a role in inorganic carbon-concentration. The chain is NAD(P)H-quinone oxidoreductase subunit K from Nostoc sp. (strain PCC 7120 / SAG 25.82 / UTEX 2576).